The chain runs to 156 residues: Snaclec rhinocetin subunit alpha (156 aa).

The signal sequence occupies residues 1–23; sequence MGRFIFLSSGWLVVFLSLSGTGA. 3 cysteine pairs are disulfide-bonded: Cys-27-Cys-38, Cys-55-Cys-150, and Cys-125-Cys-142. In terms of domain architecture, C-type lectin spans 34–151; the sequence is YEGHCYKFFF…CGDNYPFVCM (118 aa).

It belongs to the snaclec family. Heterodimer; disulfide-linked. Expressed by the venom gland.

It localises to the secreted. In terms of biological role, antagonist of the alpha-2 subunit of the integrin alpha-2/beta-1 (ITGA2/ITGB1) on human platelets and endothelial cells. This protein inhibits collagen-stimulated activation of human platelets in a dose-dependent manner. In addition, it antagonizes the binding of monoclonal antibodies against the alpha-2 subunit of integrin alpha-2/beta-1 to platelets and it coimmunoprecipitates with this integrin. The polypeptide is Snaclec rhinocetin subunit alpha (Bitis rhinoceros (West African gaboon viper)).